Reading from the N-terminus, the 662-residue chain is Protein distal antenna (662 aa).

Positions 21–72 (TKGKRPLRHLTATDKIDAIQRIHDGESKASVARDIGVPESTLRGWCKNEEKL) constitute an HTH psq-type domain. Positions 48–68 (KASVARDIGVPESTLRGWCKN) form a DNA-binding region, H-T-H motif. Disordered stretches follow at residues 265–299 (RNAR…STPS), 348–407 (YSQM…PEDT), 491–537 (PEDL…DDEV), and 558–596 (QSSP…KSTC). The span at 349–391 (SQMPRPSSPQQPQSTPPTTTTTQQQQPQSSTPPTATPPIVSTP) shows a compositional bias: low complexity. Residues 511–520 (FNPSPSTSIK) show a composition bias toward polar residues. The span at 527–536 (VDEDEDEDDE) shows a compositional bias: acidic residues.

Homomers. Interacts with itself, danr, ey and dac to form a complex (or complexes) containing the RD factors.

Its subcellular location is the nucleus. Functionally, probable transcription factor with a role in the retinal determination (RD) network. Contributes to differentiation of antenna-specific characteristics. The sequence is that of Protein distal antenna from Culex quinquefasciatus (Southern house mosquito).